The chain runs to 239 residues: 2,3,4,5-tetrahydropyridine-2,6-dicarboxylate N-acetyltransferase (239 aa).

It belongs to the transferase hexapeptide repeat family. DapH subfamily.

The enzyme catalyses (S)-2,3,4,5-tetrahydrodipicolinate + acetyl-CoA + H2O = L-2-acetamido-6-oxoheptanedioate + CoA. It functions in the pathway amino-acid biosynthesis; L-lysine biosynthesis via DAP pathway; LL-2,6-diaminopimelate from (S)-tetrahydrodipicolinate (acetylase route): step 1/3. In terms of biological role, catalyzes the transfer of an acetyl group from acetyl-CoA to tetrahydrodipicolinate. The protein is 2,3,4,5-tetrahydropyridine-2,6-dicarboxylate N-acetyltransferase of Staphylococcus aureus (strain JH9).